We begin with the raw amino-acid sequence, 378 residues long: S-adenosylmethionine synthase (378 aa).

Residue His-15 participates in ATP binding. Asp-17 serves as a coordination point for Mg(2+). Residue Glu-43 coordinates K(+). 2 residues coordinate L-methionine: Glu-56 and Gln-99. The tract at residues 99–109 (QSPDINQGINR) is flexible loop. ATP contacts are provided by residues 164–166 (DAK), 230–231 (RF), Asp-239, 245–246 (RK), Ala-262, and Lys-266. Asp-239 serves as a coordination point for L-methionine. Lys-270 lines the L-methionine pocket.

The protein belongs to the AdoMet synthase family. As to quaternary structure, homotetramer; dimer of dimers. Mg(2+) is required as a cofactor. It depends on K(+) as a cofactor.

The protein resides in the cytoplasm. The catalysed reaction is L-methionine + ATP + H2O = S-adenosyl-L-methionine + phosphate + diphosphate. It participates in amino-acid biosynthesis; S-adenosyl-L-methionine biosynthesis; S-adenosyl-L-methionine from L-methionine: step 1/1. Catalyzes the formation of S-adenosylmethionine (AdoMet) from methionine and ATP. The overall synthetic reaction is composed of two sequential steps, AdoMet formation and the subsequent tripolyphosphate hydrolysis which occurs prior to release of AdoMet from the enzyme. This Buchnera aphidicola subsp. Acyrthosiphon pisum (strain 5A) protein is S-adenosylmethionine synthase.